A 427-amino-acid chain; its full sequence is Trigger factor (427 aa).

The PPIase FKBP-type domain occupies 163–248; the sequence is GDTVVIDFVG…IHEVKEKEVP (86 aa).

Belongs to the FKBP-type PPIase family. Tig subfamily.

The protein localises to the cytoplasm. It carries out the reaction [protein]-peptidylproline (omega=180) = [protein]-peptidylproline (omega=0). Its function is as follows. Involved in protein export. Acts as a chaperone by maintaining the newly synthesized protein in an open conformation. Functions as a peptidyl-prolyl cis-trans isomerase. The polypeptide is Trigger factor (Streptococcus gordonii (strain Challis / ATCC 35105 / BCRC 15272 / CH1 / DL1 / V288)).